The sequence spans 415 residues: Actin-like protein 7B (415 aa).

Residues Met-1–Arg-31 form a disordered region. Ser-6 is subject to Phosphoserine.

The protein belongs to the actin family. Detected only in the testis and, to a lesser extent, in the prostate.

It is found in the cytoplasm. Its subcellular location is the cytoskeleton. This chain is Actin-like protein 7B (ACTL7B), found in Homo sapiens (Human).